The following is a 222-amino-acid chain: Probable fimbrial chaperone EcpB (222 aa).

An N-terminal signal peptide occupies residues 1 to 20; that stretch reads MKKHLLPLALLFSGISPAQA.

Belongs to the EcpB/EcpE family.

Its function is as follows. Part of the ecpRABCDE operon, which encodes the E.coli common pilus (ECP). ECP is found in both commensal and pathogenic strains and plays a dual role in early-stage biofilm development and host cell recognition. The sequence is that of Probable fimbrial chaperone EcpB (ecpB) from Escherichia coli (strain K12).